Here is a 314-residue protein sequence, read N- to C-terminus: Ribose-phosphate pyrophosphokinase (314 aa).

ATP is bound by residues 37-39 and 96-97; these read DGE and RQ. Mg(2+)-binding residues include His-131 and Asp-170. Residue Lys-194 is part of the active site. Residues Arg-196, Asp-220, and 224–228 each bind D-ribose 5-phosphate; that span reads DTGGT.

Belongs to the ribose-phosphate pyrophosphokinase family. Class I subfamily. As to quaternary structure, homohexamer. Requires Mg(2+) as cofactor.

It localises to the cytoplasm. The enzyme catalyses D-ribose 5-phosphate + ATP = 5-phospho-alpha-D-ribose 1-diphosphate + AMP + H(+). The protein operates within metabolic intermediate biosynthesis; 5-phospho-alpha-D-ribose 1-diphosphate biosynthesis; 5-phospho-alpha-D-ribose 1-diphosphate from D-ribose 5-phosphate (route I): step 1/1. In terms of biological role, involved in the biosynthesis of the central metabolite phospho-alpha-D-ribosyl-1-pyrophosphate (PRPP) via the transfer of pyrophosphoryl group from ATP to 1-hydroxyl of ribose-5-phosphate (Rib-5-P). The sequence is that of Ribose-phosphate pyrophosphokinase from Vibrio vulnificus (strain CMCP6).